A 356-amino-acid chain; its full sequence is Histidinol-phosphate aminotransferase 1 (356 aa).

N6-(pyridoxal phosphate)lysine is present on Lys210.

Belongs to the class-II pyridoxal-phosphate-dependent aminotransferase family. Histidinol-phosphate aminotransferase subfamily. As to quaternary structure, homodimer. The cofactor is pyridoxal 5'-phosphate.

The catalysed reaction is L-histidinol phosphate + 2-oxoglutarate = 3-(imidazol-4-yl)-2-oxopropyl phosphate + L-glutamate. The protein operates within amino-acid biosynthesis; L-histidine biosynthesis; L-histidine from 5-phospho-alpha-D-ribose 1-diphosphate: step 7/9. In Hydrogenovibrio crunogenus (strain DSM 25203 / XCL-2) (Thiomicrospira crunogena), this protein is Histidinol-phosphate aminotransferase 1.